The chain runs to 306 residues: MRYILNNNVEGTSALLGSTVATAFLQPFDFLKIRLQGSGFASGGDLNKFKRVGVIDTCKNVLKNEGIKQFWRGSSPTIVASGIAWGTYMHFYEAYKNILKSKYNVTQLNTFDHFICAVGASATQVFITNPIFLIKTRMQLQTPGSANYYTGIFDGIKKTVKVEGFKGLYKGVIPSLWLTFHGGIQMSSYEHIKFYFSSNSGKSLDSLNASEIFIASSISKFLASTILYPFQVVKTRLQDERNIPNQNNVRVYNGTKDVIFKILKNEGIIGFYRGLVPNTLKVIPNTSITLLLYEEIKKSFNYIINE.

Over 1–10 (MRYILNNNVE) the chain is Mitochondrial intermembrane. Solcar repeat units lie at residues 5 to 98 (LNNN…YKNI), 108 to 195 (LNTF…IKFY), and 207 to 299 (LNAS…IKKS). The helical transmembrane segment at 11 to 31 (GTSALLGSTVATAFLQPFDFL) threads the bilayer. At 32 to 72 (KIRLQGSGFASGGDLNKFKRVGVIDTCKNVLKNEGIKQFWR) the chain is on the mitochondrial matrix side. A helical transmembrane segment spans residues 73 to 89 (GSSPTIVASGIAWGTYM). Residues 90–113 (HFYEAYKNILKSKYNVTQLNTFDH) lie on the Mitochondrial intermembrane side of the membrane. Residues 114–134 (FICAVGASATQVFITNPIFLI) form a helical membrane-spanning segment. At 135–163 (KTRMQLQTPGSANYYTGIFDGIKKTVKVE) the chain is on the mitochondrial matrix side. Residues 164–184 (GFKGLYKGVIPSLWLTFHGGI) form a helical membrane-spanning segment. Residues 185–211 (QMSSYEHIKFYFSSNSGKSLDSLNASE) lie on the Mitochondrial intermembrane side of the membrane. A helical membrane pass occupies residues 212-232 (IFIASSISKFLASTILYPFQV). Residues 233 to 278 (VKTRLQDERNIPNQNNVRVYNGTKDVIFKILKNEGIIGFYRGLVPN) lie on the Mitochondrial matrix side of the membrane. The helical transmembrane segment at 279-296 (TLKVIPNTSITLLLYEEI) threads the bilayer. The Mitochondrial intermembrane portion of the chain corresponds to 297–306 (KKSFNYIINE).

This sequence belongs to the mitochondrial carrier (TC 2.A.29) family.

Its subcellular location is the mitochondrion inner membrane. In terms of biological role, mitochondrial solute carriers shuttle metabolites, nucleotides, and cofactors through the mitochondrial inner membrane. Transports folate across the inner membranes of mitochondria. In Dictyostelium discoideum (Social amoeba), this protein is Mitochondrial substrate carrier family protein M (mcfM).